The following is a 147-amino-acid chain: uncharacterized protein (147 aa).

Positions 2–63 constitute an HTH asnC-type domain; it reads LDELDKKIIG…KLNYENIGYD (62 aa). Residues 21-40 constitute a DNA-binding region (H-T-H motif); that stretch reads YREIAKELNVAVGTIYNRIK.

This is an uncharacterized protein from Pyrococcus abyssi (strain GE5 / Orsay).